Here is a 143-residue protein sequence, read N- to C-terminus: Succinate dehydrogenase assembly factor 2, mitochondrial (143 aa).

Belongs to the SDHAF2 family. In terms of assembly, interacts with the flavoprotein subunit within the SDH catalytic dimer.

The protein resides in the mitochondrion matrix. In terms of biological role, plays an essential role in the assembly of succinate dehydrogenase (SDH), an enzyme complex (also referred to as respiratory complex II) that is a component of both the tricarboxylic acid (TCA) cycle and the mitochondrial electron transport chain, and which couples the oxidation of succinate to fumarate with the reduction of ubiquinone (coenzyme Q) to ubiquinol. Required for flavinylation (covalent attachment of FAD) of the flavoprotein subunit of the SDH catalytic dimer. This is Succinate dehydrogenase assembly factor 2, mitochondrial from Schizosaccharomyces japonicus (strain yFS275 / FY16936) (Fission yeast).